A 122-amino-acid chain; its full sequence is Large ribosomal subunit protein uL14 (122 aa).

This sequence belongs to the universal ribosomal protein uL14 family. Part of the 50S ribosomal subunit. Forms a cluster with proteins L3 and L19. In the 70S ribosome, L14 and L19 interact and together make contacts with the 16S rRNA in bridges B5 and B8.

Functionally, binds to 23S rRNA. Forms part of two intersubunit bridges in the 70S ribosome. This is Large ribosomal subunit protein uL14 from Paenarthrobacter aurescens (strain TC1).